Here is a 373-residue protein sequence, read N- to C-terminus: Erythronate-4-phosphate dehydrogenase (373 aa).

Positions 45 and 66 each coordinate substrate. NAD(+) contacts are provided by aspartate 146 and threonine 173. The active site involves arginine 206. Aspartate 230 is an NAD(+) binding site. Glutamate 235 is a catalytic residue. Catalysis depends on histidine 252, which acts as the Proton donor. Residue glycine 255 coordinates NAD(+). Tyrosine 256 serves as a coordination point for substrate.

Belongs to the D-isomer specific 2-hydroxyacid dehydrogenase family. PdxB subfamily. In terms of assembly, homodimer.

The protein localises to the cytoplasm. The enzyme catalyses 4-phospho-D-erythronate + NAD(+) = (R)-3-hydroxy-2-oxo-4-phosphooxybutanoate + NADH + H(+). It functions in the pathway cofactor biosynthesis; pyridoxine 5'-phosphate biosynthesis; pyridoxine 5'-phosphate from D-erythrose 4-phosphate: step 2/5. Catalyzes the oxidation of erythronate-4-phosphate to 3-hydroxy-2-oxo-4-phosphonooxybutanoate. The polypeptide is Erythronate-4-phosphate dehydrogenase (Saccharophagus degradans (strain 2-40 / ATCC 43961 / DSM 17024)).